The primary structure comprises 953 residues: Isoleucine--tRNA ligase (953 aa).

Residues 57–67 carry the 'HIGH' region motif; it reads PYANGDIHIGH. E582 contributes to the L-isoleucyl-5'-AMP binding site. The 'KMSKS' region signature appears at 623–627; it reads KMSKS. K626 is a binding site for ATP. Zn(2+) contacts are provided by C916, C919, C936, and C939.

This sequence belongs to the class-I aminoacyl-tRNA synthetase family. IleS type 1 subfamily. As to quaternary structure, monomer. It depends on Zn(2+) as a cofactor.

Its subcellular location is the cytoplasm. The catalysed reaction is tRNA(Ile) + L-isoleucine + ATP = L-isoleucyl-tRNA(Ile) + AMP + diphosphate. In terms of biological role, catalyzes the attachment of isoleucine to tRNA(Ile). As IleRS can inadvertently accommodate and process structurally similar amino acids such as valine, to avoid such errors it has two additional distinct tRNA(Ile)-dependent editing activities. One activity is designated as 'pretransfer' editing and involves the hydrolysis of activated Val-AMP. The other activity is designated 'posttransfer' editing and involves deacylation of mischarged Val-tRNA(Ile). The polypeptide is Isoleucine--tRNA ligase (Bordetella parapertussis (strain 12822 / ATCC BAA-587 / NCTC 13253)).